Here is a 306-residue protein sequence, read N- to C-terminus: D-alanine--D-alanine ligase (306 aa).

Residues 106-301 (KLLWQSAGIN…FEELVLKILG (196 aa)) form the ATP-grasp domain. Residue 132-187 (AKELGLPLIVKPSREGSTIGLSKVREAGEVAAAWHLAARHDAMVLAEQFIEGTELT) participates in ATP binding. The Mg(2+) site is built by aspartate 255, glutamate 268, and asparagine 270.

It belongs to the D-alanine--D-alanine ligase family. Requires Mg(2+) as cofactor. Mn(2+) serves as cofactor.

The protein resides in the cytoplasm. It carries out the reaction 2 D-alanine + ATP = D-alanyl-D-alanine + ADP + phosphate + H(+). The protein operates within cell wall biogenesis; peptidoglycan biosynthesis. Functionally, cell wall formation. In Nitrosospira multiformis (strain ATCC 25196 / NCIMB 11849 / C 71), this protein is D-alanine--D-alanine ligase.